Here is a 246-residue protein sequence, read N- to C-terminus: Agamous-like MADS-box protein AGL5 (246 aa).

One can recognise an MADS-box domain in the interval R18–Y72. The region spanning T102 to L192 is the K-box domain.

In terms of assembly, interacts with AGL15 and AGL16.

Its subcellular location is the nucleus. Its function is as follows. Probable transcription factor. Interacts genetically with TT16/AGL32 in a partially antagonistic manner during flower development. Is essential for the coordination of cell divisions in ovule, seed coat development and endosperm formation. This chain is Agamous-like MADS-box protein AGL5 (AGL5), found in Arabidopsis thaliana (Mouse-ear cress).